We begin with the raw amino-acid sequence, 341 residues long: L-amino acid-D/L-Glu epimerase (341 aa).

Substrate contacts are provided by residues T132 and 157-159; that span reads KIK. Residues D186, E212, and D237 each contribute to the Mg(2+) site. Substrate is bound by residues K261 and 315–317; that span reads DLD.

Belongs to the mandelate racemase/muconate lactonizing enzyme family. The cofactor is Mg(2+).

Its function is as follows. Catalyzes the epimerization of dipeptides with L-Glu in the second position. Has epimerase activity with L-Gly-L-Glu, L-Ala-L-Glu, L-Ser-L-Glu, L-Pro-L-Glu, L-Val-L-Glu, L-Met-L-Glu, L-Thr-L-Glu and L-Phe-L-Glu (in vitro). This chain is L-amino acid-D/L-Glu epimerase, found in Sulfurimonas denitrificans (strain ATCC 33889 / DSM 1251) (Thiomicrospira denitrificans (strain ATCC 33889 / DSM 1251)).